The following is a 501-amino-acid chain: MDTVRVRFAPSPTGSLHIGGARTALFNWLFARHHGGAFILRLEDTDTGRNIDEAAAQIVSSLRWLGIDWDEGYDRGGPFGPYRQSERFELYREEARRLLANGDAYWCYCTPEDLAAQREEARQRGEVPRYDGRCRQLTDDARREKEAAGIRPALRVKMPKTGTTVVKDRIRGEIGFDNATLDDIIVMKSNGGPTYNFACVVDDGAMRISHVIRAEEHLSNTPKQIVLFNLLGYALPEFVHVPMILAPDRSKLSKRHGATAVDEFRADGFLPEALINYLALLGWSPGSEQEQFTVEELVASFSLDAVSKHAAIYDVKKLTWLNAQYLNSLPQARVVEAVRPFMQEAGYLSATPNPAELDYLSRVVEAVRSRVHTLAELRDASAYFYRSDFEYDDKGVRKHFTKPGVTNILARGRDALSRLPAGRFTVEGTEEAFRQVIEELGVSGGTLIHPTRLALSGRTVGPGLFDIIAVLGKEECLLRLDRAIAWIGANVNNANRTDACS.

Positions 10-20 (PSPTGSLHIGG) match the 'HIGH' region motif. The short motif at 251-255 (KLSKR) is the 'KMSKS' region element. Lys254 contacts ATP.

It belongs to the class-I aminoacyl-tRNA synthetase family. Glutamate--tRNA ligase type 1 subfamily. In terms of assembly, monomer.

It is found in the cytoplasm. It catalyses the reaction tRNA(Glu) + L-glutamate + ATP = L-glutamyl-tRNA(Glu) + AMP + diphosphate. In terms of biological role, catalyzes the attachment of glutamate to tRNA(Glu) in a two-step reaction: glutamate is first activated by ATP to form Glu-AMP and then transferred to the acceptor end of tRNA(Glu). This Desulforudis audaxviator (strain MP104C) protein is Glutamate--tRNA ligase.